Reading from the N-terminus, the 1305-residue chain is DNA-directed DNA polymerase (1305 aa).

The protein belongs to the DNA polymerase type-C family.

It catalyses the reaction DNA(n) + a 2'-deoxyribonucleoside 5'-triphosphate = DNA(n+1) + diphosphate. Its function is as follows. Replicates viral genomic DNA. In Bacillus pumilus (Bacillus mesentericus), this protein is DNA-directed DNA polymerase.